A 264-amino-acid chain; its full sequence is 5'-nucleotidase SurE (264 aa).

A divalent metal cation is bound by residues Asp-8, Asp-9, Ser-39, and Asn-95.

It belongs to the SurE nucleotidase family. It depends on a divalent metal cation as a cofactor.

The protein localises to the cytoplasm. The enzyme catalyses a ribonucleoside 5'-phosphate + H2O = a ribonucleoside + phosphate. Functionally, nucleotidase that shows phosphatase activity on nucleoside 5'-monophosphates. The polypeptide is 5'-nucleotidase SurE (Syntrophomonas wolfei subsp. wolfei (strain DSM 2245B / Goettingen)).